The primary structure comprises 335 residues: MIQFQRLHKSYSVDGRQIVALHPLDLRIGPGEVFGIIGHSGAGKSTLIRLINRLEEPSGGRLLIGDEDVTALDGQGLRALRRRIGMIFQHFNLLSSRTVAGNVAFPLELAGTPRAEIDARVAELLARVGLQEHANKYPAQLSGGQKQRVGIARALATRPQILLCDEATSALDPQTTASVLQLLAQINRELGLTIVLITHEMDVIRRVCDRVAVLDAGKLVETGPVTEVFLHPKHATTRRFVSEAEHVDEAELHRDFAAVGGRIVRLTFLGNGTYEPVLGRIARETGVDYNILSGRVDRIKDTPYGQLIVALTGGDQNAARAGFVAAGVQVEDLRV.

The ABC transporter domain occupies 2-241 (IQFQRLHKSY…PKHATTRRFV (240 aa)). 38 to 45 (GHSGAGKS) is a binding site for ATP.

The protein belongs to the ABC transporter superfamily. Methionine importer (TC 3.A.1.24) family. As to quaternary structure, the complex is composed of two ATP-binding proteins (MetN), two transmembrane proteins (MetI) and a solute-binding protein (MetQ).

Its subcellular location is the cell inner membrane. It carries out the reaction L-methionine(out) + ATP + H2O = L-methionine(in) + ADP + phosphate + H(+). The catalysed reaction is D-methionine(out) + ATP + H2O = D-methionine(in) + ADP + phosphate + H(+). Its function is as follows. Part of the ABC transporter complex MetNIQ involved in methionine import. Responsible for energy coupling to the transport system. This chain is Methionine import ATP-binding protein MetN, found in Xanthomonas euvesicatoria pv. vesicatoria (strain 85-10) (Xanthomonas campestris pv. vesicatoria).